The following is a 130-amino-acid chain: uncharacterized protein (130 aa).

This is an uncharacterized protein from Bacillus subtilis (strain 168).